Here is a 375-residue protein sequence, read N- to C-terminus: 23S rRNA (uracil(747)-C(5))-methyltransferase RlmC (375 aa).

The [4Fe-4S] cluster site is built by Cys3, Cys11, Cys14, and Cys87. Gln212, Phe241, Glu262, and Asn307 together coordinate S-adenosyl-L-methionine. The active-site Nucleophile is Cys334.

This sequence belongs to the class I-like SAM-binding methyltransferase superfamily. RNA M5U methyltransferase family. RlmC subfamily.

It catalyses the reaction uridine(747) in 23S rRNA + S-adenosyl-L-methionine = 5-methyluridine(747) in 23S rRNA + S-adenosyl-L-homocysteine + H(+). Its function is as follows. Catalyzes the formation of 5-methyl-uridine at position 747 (m5U747) in 23S rRNA. This chain is 23S rRNA (uracil(747)-C(5))-methyltransferase RlmC, found in Escherichia coli O9:H4 (strain HS).